A 218-amino-acid polypeptide reads, in one-letter code: Large ribosomal subunit protein bL25 (218 aa).

A disordered region spans residues 185–218; the sequence is ARAAEEEAPAAEETTAEPELVRERREPRAEEEEE. Residues 190–200 are compositionally biased toward acidic residues; the sequence is EEAPAAEETTA. Residues 203–212 show a composition bias toward basic and acidic residues; it reads ELVRERREPR.

The protein belongs to the bacterial ribosomal protein bL25 family. CTC subfamily. In terms of assembly, part of the 50S ribosomal subunit; part of the 5S rRNA/L5/L18/L25 subcomplex. Contacts the 5S rRNA. Binds to the 5S rRNA independently of L5 and L18.

Functionally, this is one of the proteins that binds to the 5S RNA in the ribosome where it forms part of the central protuberance. The chain is Large ribosomal subunit protein bL25 from Roseiflexus castenholzii (strain DSM 13941 / HLO8).